The primary structure comprises 589 residues: L-fucose isomerase (589 aa).

Catalysis depends on proton acceptor residues Glu340 and Asp364. The Mn(2+) site is built by Glu340, Asp364, and His527.

Belongs to the L-fucose isomerase family. It depends on Mn(2+) as a cofactor.

It is found in the cytoplasm. The catalysed reaction is L-fucose = L-fuculose. Its pathway is carbohydrate degradation; L-fucose degradation; L-lactaldehyde and glycerone phosphate from L-fucose: step 1/3. Functionally, converts the aldose L-fucose into the corresponding ketose L-fuculose. This chain is L-fucose isomerase, found in Haemophilus influenzae (strain ATCC 51907 / DSM 11121 / KW20 / Rd).